Reading from the N-terminus, the 270-residue chain is Mediator of RNA polymerase II transcription subunit 4 (270 aa).

The interval 1-22 (MAASSSGEKEKERMGGVSGMTG) is disordered. An N-acetylalanine modification is found at alanine 2. Positions 26 to 131 (TRERLLSALE…ATAVYQAKEK (106 aa)) form a coiled coil. Serine 32 carries the phosphoserine modification. The interval 227 to 270 (MSVNMLPPNHSTDFLLEPPGHNKENEDDVEVMSTDSSSSSSDSD) is disordered. Low complexity predominate over residues 259–270 (STDSSSSSSDSD).

The protein belongs to the Mediator complex subunit 4 family. In terms of assembly, component of the Mediator complex, which is composed of MED1, MED4, MED6, MED7, MED8, MED9, MED10, MED11, MED12, MED13, MED13L, MED14, MED15, MED16, MED17, MED18, MED19, MED20, MED21, MED22, MED23, MED24, MED25, MED26, MED27, MED29, MED30, MED31, CCNC, CDK8 and CDC2L6/CDK11. The MED12, MED13, CCNC and CDK8 subunits form a distinct module termed the CDK8 module. Mediator containing the CDK8 module is less active than Mediator lacking this module in supporting transcriptional activation. Individual preparations of the Mediator complex lacking one or more distinct subunits have been variously termed ARC, CRSP, DRIP, PC2, SMCC and TRAP.

Its subcellular location is the nucleus. Its function is as follows. Component of the Mediator complex, a coactivator involved in the regulated transcription of nearly all RNA polymerase II-dependent genes. Mediator functions as a bridge to convey information from gene-specific regulatory proteins to the basal RNA polymerase II transcription machinery. Mediator is recruited to promoters by direct interactions with regulatory proteins and serves as a scaffold for the assembly of a functional preinitiation complex with RNA polymerase II and the general transcription factors. In Rattus norvegicus (Rat), this protein is Mediator of RNA polymerase II transcription subunit 4 (Med4).